A 536-amino-acid polypeptide reads, in one-letter code: Phosphoenolpyruvate carboxykinase (ATP) (536 aa).

The substrate site is built by Arg-61, Tyr-195, and Lys-201. Residues Lys-201, His-220, and 236–244 (GLSGTGKTT) contribute to the ATP site. Residues Lys-201 and His-220 each contribute to the Mn(2+) site. Asp-257 serves as a coordination point for Mn(2+). Residues Glu-285, Arg-323, and Thr-448 each coordinate ATP. Arg-323 provides a ligand contact to substrate.

It belongs to the phosphoenolpyruvate carboxykinase (ATP) family. Mn(2+) is required as a cofactor.

It is found in the cytoplasm. It catalyses the reaction oxaloacetate + ATP = phosphoenolpyruvate + ADP + CO2. The protein operates within carbohydrate biosynthesis; gluconeogenesis. Functionally, involved in the gluconeogenesis. Catalyzes the conversion of oxaloacetate (OAA) to phosphoenolpyruvate (PEP) through direct phosphoryl transfer between the nucleoside triphosphate and OAA. This chain is Phosphoenolpyruvate carboxykinase (ATP), found in Methylobacterium sp. (strain 4-46).